The following is a 462-amino-acid chain: Amino-acid permease AapA (462 aa).

The next 12 helical transmembrane spans lie at 27 to 47 (LMAI…KSIH), 48 to 68 (FAGP…FFIM), 96 to 116 (AAFI…MADL), 134 to 154 (LPGL…VKLF), 160 to 180 (WFAL…ILLI), 209 to 229 (GFIL…LVGL), 252 to 272 (ILLF…WNVL), 279 to 299 (FVQV…NFVV), 343 to 363 (ALFF…LMPE), 366 to 386 (FTLI…ITVI), 410 to 430 (PLSN…LALA), and 435 to 455 (IALF…KVQT).

It belongs to the amino acid-polyamine-organocation (APC) superfamily.

The protein localises to the cell membrane. Its function is as follows. Probable amino-acid or metabolite transport protein. The chain is Amino-acid permease AapA (aapA) from Bacillus subtilis (strain 168).